Consider the following 267-residue polypeptide: Tryptophan synthase alpha chain (267 aa).

Residues Glu47 and Asp58 each act as proton acceptor in the active site.

The protein belongs to the TrpA family. Tetramer of two alpha and two beta chains.

The enzyme catalyses (1S,2R)-1-C-(indol-3-yl)glycerol 3-phosphate + L-serine = D-glyceraldehyde 3-phosphate + L-tryptophan + H2O. It participates in amino-acid biosynthesis; L-tryptophan biosynthesis; L-tryptophan from chorismate: step 5/5. Functionally, the alpha subunit is responsible for the aldol cleavage of indoleglycerol phosphate to indole and glyceraldehyde 3-phosphate. The chain is Tryptophan synthase alpha chain from Chlorobaculum tepidum (strain ATCC 49652 / DSM 12025 / NBRC 103806 / TLS) (Chlorobium tepidum).